The sequence spans 160 residues: Protein Vago (160 aa).

The first 23 residues, 1–23 (MESISSMIYLVAMMSLIIGGSQA), serve as a signal peptide directing secretion.

Expressed in fat body.

The protein localises to the secreted. Its function is as follows. Probably involved in the antiviral immune response. May have a role in controlling viral load in the adult fat body, after infection with viruses such as the Drosophila C virus. In Drosophila melanogaster (Fruit fly), this protein is Protein Vago.